Consider the following 273-residue polypeptide: Octanoyltransferase (273 aa).

Positions 35-254 (DRVPDTCLLL…HLRDILENAE (220 aa)) constitute a BPL/LPL catalytic domain. Residues 73–80 (RGGKITWH), 184–186 (AIG), and 197–199 (GFA) each bind substrate. The active-site Acyl-thioester intermediate is the cysteine 215.

It belongs to the LipB family.

The protein localises to the cytoplasm. It catalyses the reaction octanoyl-[ACP] + L-lysyl-[protein] = N(6)-octanoyl-L-lysyl-[protein] + holo-[ACP] + H(+). It functions in the pathway protein modification; protein lipoylation via endogenous pathway; protein N(6)-(lipoyl)lysine from octanoyl-[acyl-carrier-protein]: step 1/2. Its function is as follows. Catalyzes the transfer of endogenously produced octanoic acid from octanoyl-acyl-carrier-protein onto the lipoyl domains of lipoate-dependent enzymes. Lipoyl-ACP can also act as a substrate although octanoyl-ACP is likely to be the physiological substrate. The chain is Octanoyltransferase from Streptomyces griseus subsp. griseus (strain JCM 4626 / CBS 651.72 / NBRC 13350 / KCC S-0626 / ISP 5235).